A 424-amino-acid chain; its full sequence is C4-dicarboxylate transport protein (424 aa).

Transmembrane regions (helical) follow at residues 4–24, 44–64, 76–96, 142–162, 184–206, 222–242, 326–346, and 352–372; these read SLFK…VLLG, LIKM…IAGM, VALI…LVVV, IGAF…LFGF, VFFG…AMAF, LIVC…GLIA, IWHQ…AAGV, and IVLA…LALI.

The protein belongs to the dicarboxylate/amino acid:cation symporter (DAACS) (TC 2.A.23) family.

It is found in the cell inner membrane. Its function is as follows. Responsible for the transport of dicarboxylates such as succinate, fumarate, and malate from the periplasm across the membrane. The sequence is that of C4-dicarboxylate transport protein from Erwinia tasmaniensis (strain DSM 17950 / CFBP 7177 / CIP 109463 / NCPPB 4357 / Et1/99).